The following is a 334-amino-acid chain: HTH-type transcriptional repressor PurR (334 aa).

The 55-residue stretch at 2–56 (ATIKDVARLAGVSTTTVSHVINKTRFVAEATQEKVMKAVDELNYAPSAVARSLKC) folds into the HTH lacI-type domain. Residues 4–23 (IKDVARLAGVSTTTVSHVIN) constitute a DNA-binding region (H-T-H motif). A DNA-binding region spans residues 48 to 56 (SAVARSLKC). Hypoxanthine contacts are provided by Phe-73, Lys-189, Phe-220, and Asp-274.

In terms of assembly, homodimer.

The protein operates within purine metabolism; purine nucleotide biosynthesis [regulation]. In terms of biological role, is the main repressor of the genes involved in the de novo synthesis of purine nucleotides, regulating purB, purC, purEK, purF, purHD, purL, purMN and guaBA expression. PurR is allosterically activated to bind its cognate DNA by binding the purine corepressors, hypoxanthine or guanine, thereby effecting transcription repression. The chain is HTH-type transcriptional repressor PurR from Vibrio vulnificus (strain CMCP6).